The following is a 182-amino-acid chain: Large ribosomal subunit protein bL17m (182 aa).

It belongs to the bacterial ribosomal protein bL17 family.

The protein localises to the mitochondrion. The sequence is that of Large ribosomal subunit protein bL17m (mrpl17) from Dictyostelium discoideum (Social amoeba).